Here is a 24-residue protein sequence, read N- to C-terminus: Brevinin-1Bd (24 aa).

Cysteine 18 and cysteine 24 form a disulfide bridge.

Expressed by the skin glands.

The protein localises to the secreted. Functionally, antibacterial activity against Gram-positive bacterium S.aureus and Gram-negative bacterium E.coli. Has activity against C.albicans. In Lithobates berlandieri (Rio Grande leopard frog), this protein is Brevinin-1Bd.